A 182-amino-acid chain; its full sequence is Mid1-interacting protein 1 (182 aa).

An N-acetylmethionine modification is found at methionine 1. The segment at 55-75 (VGGSGGCLEERTTPAPSPGSA) is disordered. 3 positions are modified to phosphoserine: serine 71, serine 74, and serine 78.

Belongs to the SPOT14 family. Homodimer in the absence of THRSP. Heterodimer with THRSP. The homodimer interacts with ACACA and ACACB. Promotes polymerization of Acetyl-CoA carboxylase to form complexes that contain MID1IP1 and ACACA and/or ACACB. Interaction with THRSP interferes with ACACA binding. In terms of tissue distribution, during embryonic development, expressed mainly in the neuroepithelial midline, urogenital apparatus and digits. Detected in adult white fat, liver, heart, brain and kidney. Expressed at very low levels in lactating mammary gland.

The protein resides in the nucleus. It localises to the cytoplasm. Its subcellular location is the cytoskeleton. Its function is as follows. Plays a role in the regulation of lipogenesis in liver. Up-regulates ACACA enzyme activity. Required for efficient lipid biosynthesis, including triacylglycerol, diacylglycerol and phospholipid. Involved in stabilization of microtubules. This Mus musculus (Mouse) protein is Mid1-interacting protein 1 (Mid1ip1).